The chain runs to 518 residues: MFKIMKDFTEQEKIIVLDFGSQYNQLITRRIREFGVYSELHPHTITVEEMKALNPTGIIFSGGPNSVYDKDAFRADERIFDMGIPILGICYGMQLMTTHFDGKVERAKDREYGKADIHVENPSRLFAGLPTDQVVWMSHGDLVVEEPAGFEVTATSPSCPIAGIADEERLLYGVQFHPEVRHSVYGNELLKNFALNVCGCKGDWTMENFSEVEIAKIQEIVGDKKVLLALSGGVDSSVVGVLIHKAIGDQLTCIFVDHGLLRKGEADQVMATLQGEFNMNIIKVDAKKRFMDKLAGVSDPEQKRKIIGNEFIYVFDDEANKLDGVEFLAQGTLYTDIIESGTATAQTIKSHHNVGGLPEDMQFKLIEPLNTLFKDEVRALGTELGMPDAIVWRQPFPGPGLGIRVLGEITEEKLEIVRDSDYILREEIKKAGLEREIWQYFTALPNIRSVGVMGDGRTYDHTVVVRAVTSIDGMTADWARIPWDVLEKISVRIVNEVDHVNRVVYDITSKPPATVEWE.

Residues 13-203 form the Glutamine amidotransferase type-1 domain; that stretch reads KIIVLDFGSQ…ALNVCGCKGD (191 aa). The active-site Nucleophile is C90. Residues H177 and E179 contribute to the active site. The GMPS ATP-PPase domain occupies 204 to 393; sequence WTMENFSEVE…LGMPDAIVWR (190 aa). 231 to 237 is an ATP binding site; that stretch reads SGGVDSS.

As to quaternary structure, homodimer.

The catalysed reaction is XMP + L-glutamine + ATP + H2O = GMP + L-glutamate + AMP + diphosphate + 2 H(+). Its pathway is purine metabolism; GMP biosynthesis; GMP from XMP (L-Gln route): step 1/1. Catalyzes the synthesis of GMP from XMP. The chain is GMP synthase [glutamine-hydrolyzing] from Listeria welshimeri serovar 6b (strain ATCC 35897 / DSM 20650 / CCUG 15529 / CIP 8149 / NCTC 11857 / SLCC 5334 / V8).